The following is a 950-amino-acid chain: Glycine dehydrogenase (decarboxylating) (950 aa).

An N6-(pyridoxal phosphate)lysine modification is found at K698.

The protein belongs to the GcvP family. As to quaternary structure, the glycine cleavage system is composed of four proteins: P, T, L and H. It depends on pyridoxal 5'-phosphate as a cofactor.

It catalyses the reaction N(6)-[(R)-lipoyl]-L-lysyl-[glycine-cleavage complex H protein] + glycine + H(+) = N(6)-[(R)-S(8)-aminomethyldihydrolipoyl]-L-lysyl-[glycine-cleavage complex H protein] + CO2. Functionally, the glycine cleavage system catalyzes the degradation of glycine. The P protein binds the alpha-amino group of glycine through its pyridoxal phosphate cofactor; CO(2) is released and the remaining methylamine moiety is then transferred to the lipoamide cofactor of the H protein. In Neisseria meningitidis serogroup A / serotype 4A (strain DSM 15465 / Z2491), this protein is Glycine dehydrogenase (decarboxylating).